Here is a 428-residue protein sequence, read N- to C-terminus: 3-phosphoshikimate 1-carboxyvinyltransferase (428 aa).

3-phosphoshikimate contacts are provided by lysine 19, serine 20, and arginine 24. Lysine 19 is a binding site for phosphoenolpyruvate. Positions 91 and 119 each coordinate phosphoenolpyruvate. 3-phosphoshikimate-binding residues include serine 164, glutamine 166, aspartate 312, and lysine 339. Residue glutamine 166 coordinates phosphoenolpyruvate. Aspartate 312 functions as the Proton acceptor in the catalytic mechanism. Positions 343 and 386 each coordinate phosphoenolpyruvate.

The protein belongs to the EPSP synthase family. As to quaternary structure, monomer.

The protein resides in the cytoplasm. It carries out the reaction 3-phosphoshikimate + phosphoenolpyruvate = 5-O-(1-carboxyvinyl)-3-phosphoshikimate + phosphate. It functions in the pathway metabolic intermediate biosynthesis; chorismate biosynthesis; chorismate from D-erythrose 4-phosphate and phosphoenolpyruvate: step 6/7. Catalyzes the transfer of the enolpyruvyl moiety of phosphoenolpyruvate (PEP) to the 5-hydroxyl of shikimate-3-phosphate (S3P) to produce enolpyruvyl shikimate-3-phosphate and inorganic phosphate. This Bacillus pumilus (strain SAFR-032) protein is 3-phosphoshikimate 1-carboxyvinyltransferase.